Reading from the N-terminus, the 287-residue chain is Polyamine aminopropyltransferase (287 aa).

Residues 9–242 (GSWLDEYQND…GIWSWTFASI (234 aa)) enclose the PABS domain. S-methyl-5'-thioadenosine is bound at residue Q36. Spermidine is bound by residues H67 and D91. Residues E111 and 143-144 (NG) each bind S-methyl-5'-thioadenosine. Residue D162 is the Proton acceptor of the active site. An S-methyl-5'-thioadenosine-binding site is contributed by P169.

It belongs to the spermidine/spermine synthase family. In terms of assembly, homodimer or homotetramer.

It is found in the cytoplasm. The enzyme catalyses S-adenosyl 3-(methylsulfanyl)propylamine + putrescine = S-methyl-5'-thioadenosine + spermidine + H(+). It functions in the pathway amine and polyamine biosynthesis; spermidine biosynthesis; spermidine from putrescine: step 1/1. In terms of biological role, catalyzes the irreversible transfer of a propylamine group from the amino donor S-adenosylmethioninamine (decarboxy-AdoMet) to putrescine (1,4-diaminobutane) to yield spermidine. The sequence is that of Polyamine aminopropyltransferase from Prochlorococcus marinus (strain SARG / CCMP1375 / SS120).